A 271-amino-acid polypeptide reads, in one-letter code: Glutamate racemase (271 aa).

Residues 12 to 13 (DS) and 44 to 45 (YG) each bind substrate. Cys75 serves as the catalytic Proton donor/acceptor. 76 to 77 (NS) serves as a coordination point for substrate. Cys185 acts as the Proton donor/acceptor in catalysis. Position 186–187 (186–187 (TH)) interacts with substrate.

It belongs to the aspartate/glutamate racemases family.

The enzyme catalyses L-glutamate = D-glutamate. It participates in cell wall biogenesis; peptidoglycan biosynthesis. Provides the (R)-glutamate required for cell wall biosynthesis. The polypeptide is Glutamate racemase (Mycobacterium bovis (strain BCG / Pasteur 1173P2)).